The primary structure comprises 61 residues: Large ribosomal subunit protein uL30 (61 aa).

The protein belongs to the universal ribosomal protein uL30 family. In terms of assembly, part of the 50S ribosomal subunit.

The polypeptide is Large ribosomal subunit protein uL30 (Chlorobium limicola (strain DSM 245 / NBRC 103803 / 6330)).